Consider the following 77-residue polypeptide: Integrin beta-2 (77 aa).

Residues Cys36 and Cys43 are joined by a disulfide bond. A glycan (N-linked (GlcNAc...) asparagine) is linked at Asn54.

The protein belongs to the integrin beta chain family. As to quaternary structure, dimer of an alpha and beta subunit.

It is found in the membrane. Its function is as follows. Integrins are a large family of cell surface glycoproteins that mediate cell to cell and cell to matrix adhesion. In Xenopus laevis (African clawed frog), this protein is Integrin beta-2 (itgb2).